Reading from the N-terminus, the 301-residue chain is 5'-adenylylsulfate reductase-like 5 (301 aa).

The first 21 residues, 1–21 (MTRCAVVAAVAAVLLVAGAAA), serve as a signal peptide directing secretion. Positions 51–164 (CIRIEPSPPV…LVDFYKETTG (114 aa)) constitute a Thioredoxin domain. The N-linked (GlcNAc...) asparagine glycan is linked to N139. A helical transmembrane segment spans residues 201–221 (FVLLAVLFIILKVAAHFVPIV). N268 carries N-linked (GlcNAc...) asparagine glycosylation.

It is found in the membrane. This Oryza sativa subsp. japonica (Rice) protein is 5'-adenylylsulfate reductase-like 5 (APRL5).